A 661-amino-acid polypeptide reads, in one-letter code: UvrABC system protein B (661 aa).

The 156-residue stretch at 31-186 (DNIEGGEKAQ…LLNALVDIQF (156 aa)) folds into the Helicase ATP-binding domain. 44–51 (GATGTGKT) contacts ATP. The Beta-hairpin signature appears at 97-120 (YYDYYQPEAYVPSSDTYIEKDSSV). Residues 435–601 (QMDDLLGEIN…TIKKEIRDLI (167 aa)) form the Helicase C-terminal domain. The region spanning 626 to 661 (KAMIKKLEGQMQEAAEVLDFELAAQIRDMVIELKNM) is the UVR domain.

It belongs to the UvrB family. In terms of assembly, forms a heterotetramer with UvrA during the search for lesions. Interacts with UvrC in an incision complex.

The protein localises to the cytoplasm. Functionally, the UvrABC repair system catalyzes the recognition and processing of DNA lesions. A damage recognition complex composed of 2 UvrA and 2 UvrB subunits scans DNA for abnormalities. Upon binding of the UvrA(2)B(2) complex to a putative damaged site, the DNA wraps around one UvrB monomer. DNA wrap is dependent on ATP binding by UvrB and probably causes local melting of the DNA helix, facilitating insertion of UvrB beta-hairpin between the DNA strands. Then UvrB probes one DNA strand for the presence of a lesion. If a lesion is found the UvrA subunits dissociate and the UvrB-DNA preincision complex is formed. This complex is subsequently bound by UvrC and the second UvrB is released. If no lesion is found, the DNA wraps around the other UvrB subunit that will check the other stand for damage. In Streptococcus suis (strain 98HAH33), this protein is UvrABC system protein B.